The sequence spans 115 residues: T cell receptor beta variable 16 (115 aa).

Positions 1 to 20 (MSPIFTCITILCLLAAGSPG) are cleaved as a signal peptide. The 95-residue stretch at 21-115 (EEVAQTPKHL…SAVYFCASSQ (95 aa)) folds into the Ig-like domain. C42 and C111 are joined by a disulfide.

Alpha-beta TR is a heterodimer composed of an alpha and beta chain; disulfide-linked. The alpha-beta TR is associated with the transmembrane signaling CD3 coreceptor proteins to form the TR-CD3 (TcR or TCR). The assembly of alpha-beta TR heterodimers with CD3 occurs in the endoplasmic reticulum where a single alpha-beta TR heterodimer associates with one CD3D-CD3E heterodimer, one CD3G-CD3E heterodimer and one CD247 homodimer forming a stable octameric structure. CD3D-CD3E and CD3G-CD3E heterodimers preferentially associate with TR alpha and TR beta chains, respectively. The association of the CD247 homodimer is the last step of TcR assembly in the endoplasmic reticulum and is required for transport to the cell surface.

It is found in the cell membrane. In terms of biological role, v region of the variable domain of T cell receptor (TR) beta chain that participates in the antigen recognition. Alpha-beta T cell receptors are antigen specific receptors which are essential to the immune response and are present on the cell surface of T lymphocytes. Recognize peptide-major histocompatibility (MH) (pMH) complexes that are displayed by antigen presenting cells (APC), a prerequisite for efficient T cell adaptive immunity against pathogens. Binding of alpha-beta TR to pMH complex initiates TR-CD3 clustering on the cell surface and intracellular activation of LCK that phosphorylates the ITAM motifs of CD3G, CD3D, CD3E and CD247 enabling the recruitment of ZAP70. In turn ZAP70 phosphorylates LAT, which recruits numerous signaling molecules to form the LAT signalosome. The LAT signalosome propagates signal branching to three major signaling pathways, the calcium, the mitogen-activated protein kinase (MAPK) kinase and the nuclear factor NF-kappa-B (NF-kB) pathways, leading to the mobilization of transcription factors that are critical for gene expression and essential for T cell growth and differentiation. The T cell repertoire is generated in the thymus, by V-(D)-J rearrangement. This repertoire is then shaped by intrathymic selection events to generate a peripheral T cell pool of self-MH restricted, non-autoaggressive T cells. Post-thymic interaction of alpha-beta TR with the pMH complexes shapes TR structural and functional avidity. This is T cell receptor beta variable 16 from Homo sapiens (Human).